Here is a 641-residue protein sequence, read N- to C-terminus: Calpain-6 (641 aa).

Residues 26–343 enclose the Calpain catalytic domain; that stretch reads LFCDPTFLPE…FHKLNVCRNV (318 aa). Residues 344–495 are domain III; sequence NNPVFGRKEL…IFSEVPVQLR (152 aa). The C2 domain occupies 498–621; sequence TLDMPKMSCW…YLRKKGGPTA (124 aa).

It belongs to the peptidase C2 family. In terms of assembly, interacts (via domain III) with microtubules. Interacts (via domain II) with ARHGEF2 (via the N-terminal zinc finger).

The protein localises to the cytoplasm. It localises to the perinuclear region. It is found in the cytoskeleton. Its subcellular location is the spindle. In terms of biological role, microtubule-stabilizing protein that may be involved in the regulation of microtubule dynamics and cytoskeletal organization. May act as a regulator of RAC1 activity through interaction with ARHGEF2 to control lamellipodial formation and cell mobility. Does not seem to have protease activity as it has lost the active site residues. The sequence is that of Calpain-6 (Capn6) from Mus musculus (Mouse).